The chain runs to 186 residues: MDQAKLARMQASVRIGTFCSFLWIFEVLESESVFSADGFQAHHLGNVIGKGTPRRKVKKVHKSSGADDKKLQTTLKKMNVQPIQAIEEVNMFKEDGNVIHFAAPKVHASVPSNTFALYGNGEEKELTELVPGILNQLGPDSLASLRKLAESYQNMQKQAGAEGKKDEDEDDIPDLVEGENFESNVE.

An NAC-A/B domain is found at 65–130; it reads GADDKKLQTT…GEEKELTELV (66 aa). The interval 153-186 is disordered; the sequence is QNMQKQAGAEGKKDEDEDDIPDLVEGENFESNVE. A compositionally biased stretch (acidic residues) spans 167–186; that stretch reads EDEDDIPDLVEGENFESNVE.

It belongs to the NAC-beta family. Part of the nascent polypeptide-associated complex (NAC), consisting of egd2 and egd1. NAC associates with ribosomes via egd1.

Its subcellular location is the cytoplasm. It is found in the nucleus. In terms of biological role, component of the nascent polypeptide-associated complex (NAC), a dynamic component of the ribosomal exit tunnel, protecting the emerging polypeptides from interaction with other cytoplasmic proteins to ensure appropriate nascent protein targeting. The NAC complex also promotes mitochondrial protein import by enhancing productive ribosome interactions with the outer mitochondrial membrane and blocks the inappropriate interaction of ribosomes translating non-secretory nascent polypeptides with translocation sites in the membrane of the endoplasmic reticulum. EGD1 may act as a transcription factor that exert a negative effect on the expression of several genes that are transcribed by RNA polymerase II. The polypeptide is Nascent polypeptide-associated complex subunit beta (egd1) (Aspergillus fumigatus (strain ATCC MYA-4609 / CBS 101355 / FGSC A1100 / Af293) (Neosartorya fumigata)).